The primary structure comprises 381 residues: Flap endonuclease 1 (381 aa).

The segment at 1–105 (MGIKGLNSII…HELDKRTSRR (105 aa)) is N-domain. Position 34 (D34) interacts with Mg(2+). Residues R47 and R71 each contribute to the DNA site. The Mg(2+) site is built by D87, E156, E158, D177, and D179. The interval 120–251 (EKMKHERRLV…VTALKLMKEH (132 aa)) is I-domain. E156 serves as a coordination point for DNA. Residues G229 and D231 each contribute to the DNA site. D231 serves as a coordination point for Mg(2+). The interaction with PCNA stretch occupies residues 338–346 (VQGRLDGFF).

Belongs to the XPG/RAD2 endonuclease family. FEN1 subfamily. As to quaternary structure, interacts with PCNA. Three molecules of FEN1 bind to one PCNA trimer with each molecule binding to one PCNA monomer. PCNA stimulates the nuclease activity without altering cleavage specificity. The cofactor is Mg(2+). In terms of processing, phosphorylated. Phosphorylation upon DNA damage induces relocalization to the nuclear plasma.

It is found in the nucleus. The protein resides in the nucleolus. It localises to the nucleoplasm. The protein localises to the mitochondrion. Structure-specific nuclease with 5'-flap endonuclease and 5'-3' exonuclease activities involved in DNA replication and repair. During DNA replication, cleaves the 5'-overhanging flap structure that is generated by displacement synthesis when DNA polymerase encounters the 5'-end of a downstream Okazaki fragment. It enters the flap from the 5'-end and then tracks to cleave the flap base, leaving a nick for ligation. Also involved in the long patch base excision repair (LP-BER) pathway, by cleaving within the apurinic/apyrimidinic (AP) site-terminated flap. Acts as a genome stabilization factor that prevents flaps from equilibrating into structures that lead to duplications and deletions. Also possesses 5'-3' exonuclease activity on nicked or gapped double-stranded DNA, and exhibits RNase H activity. Also involved in replication and repair of rDNA and in repairing mitochondrial DNA. The chain is Flap endonuclease 1 from Candida glabrata (strain ATCC 2001 / BCRC 20586 / JCM 3761 / NBRC 0622 / NRRL Y-65 / CBS 138) (Yeast).